The chain runs to 299 residues: Palmitoyltransferase ZDHHC3 (299 aa).

Residues 1-47 (MMLIPTHHFRNIERKPEYLQPEKCVPPPYPGPVGTMWFIRDGCGIAC) are Cytoplasmic-facing. Tyr18 carries the phosphotyrosine modification. A helical membrane pass occupies residues 48–68 (AIVTWFLVLYAEFVVLFVMLI). The Extracellular segment spans residues 69–72 (PSRD). A helical membrane pass occupies residues 73-93 (YVYSIINGIVFNLLAFLALAS). The Cytoplasmic portion of the chain corresponds to 94–171 (HCRAMLTDPG…NCVGENNQKY (78 aa)). The DHHC domain maps to 127-177 (YKCPKCCSIKPDRAHHCSVCKRCIRKMDHHCPWVNNCVGENNQKYFVLFTM). Cys146 carries S-palmitoyl cysteine lipidation. Cys157 functions as the S-palmitoyl cysteine intermediate in the catalytic mechanism. A helical membrane pass occupies residues 172–192 (FVLFTMYIALISLHALIMVGF). At 193–214 (HFLHCFEEDWTKCSSFSPPTTV) the chain is on the extracellular side. Residues 215-235 (ILLILLCFEGLLFLIFTSVMF) traverse the membrane as a helical segment. Residues 236-299 (GTQVHSICTD…GKADPYQYVV (64 aa)) are Cytoplasmic-facing.

It belongs to the DHHC palmitoyltransferase family. As to quaternary structure, monomer. Homooligomers. The monomeric form has a higher catalytic activity. Forms heterooligomers with ZDHHC7. Interacts with TNFRSF10A. Autopalmitoylated. In terms of processing, phosphorylation by FGFR1 and SRC probably regulates the palmitoyltransferase activity. As to expression, widely expressed with significant expression in heart, lung, liver, skeletal muscle, kidney, testis, thymus, small intestine and leukocyte.

The protein resides in the golgi apparatus membrane. It carries out the reaction L-cysteinyl-[protein] + hexadecanoyl-CoA = S-hexadecanoyl-L-cysteinyl-[protein] + CoA. The catalysed reaction is L-cysteinyl-[protein] + tetradecanoyl-CoA = S-tetradecanoyl-L-cysteinyl-[protein] + CoA. It catalyses the reaction L-cysteinyl-[protein] + octadecanoyl-CoA = S-octadecanoyl-L-cysteinyl-[protein] + CoA. Its function is as follows. Golgi-localized palmitoyltransferase that catalyzes the addition of palmitate onto various protein substrates. Has no stringent fatty acid selectivity and in addition to palmitate can also transfer onto target proteins myristate from tetradecanoyl-CoA and stearate from octadecanoyl-CoA. Plays an important role in G protein-coupled receptor signaling pathways involving GNAQ and potentially other heterotrimeric G proteins by regulating their dynamic association with the plasma membrane. Palmitoylates ITGA6 and ITGB4, thereby regulating the alpha-6/beta-4 integrin localization, expression and function in cell adhesion to laminin. Plays a role in the TRAIL-activated apoptotic signaling pathway most probably through the palmitoylation and localization to the plasma membrane of TNFRSF10A. In the brain, by palmitoylating the gamma subunit GABRG2 of GABA(A) receptors and regulating their postsynaptic accumulation, plays a role in synaptic GABAergic inhibitory function and GABAergic innervation. Palmitoylates the neuronal protein GAP43 which is also involved in the formation of GABAergic synapses. Palmitoylates NCDN thereby regulating its association with endosome membranes. Probably palmitoylates PRCD and is involved in its proper localization within the photoreceptor. Could mediate the palmitoylation of NCAM1 and regulate neurite outgrowth. Could palmitoylate DNAJC5 and regulate its localization to Golgi membranes. Also constitutively palmitoylates DLG4. May also palmitoylate SNAP25. Could palmitoylate the glutamate receptors GRIA1 and GRIA2 but this has not been confirmed in vivo. Could also palmitoylate the D(2) dopamine receptor DRD2. May also palmitoylate LAMTOR1, promoting its localization to lysosomal membranes. Palmitoylates the Toll-like receptor 9/TLR9 in the Golgi and thereby regulates TLR9 trafficking to endosomes. May palmitoylate CALHM1 and CALHM3 subunits of gustatory voltage-gated ion channels and modulate channel gating and kinetics. May also function as a calcium transporter. The sequence is that of Palmitoyltransferase ZDHHC3 from Homo sapiens (Human).